The sequence spans 119 residues: Large ribosomal subunit protein uL24 (119 aa).

The protein belongs to the universal ribosomal protein uL24 family. Part of the 50S ribosomal subunit.

Its function is as follows. One of two assembly initiator proteins, it binds directly to the 5'-end of the 23S rRNA, where it nucleates assembly of the 50S subunit. Functionally, located at the polypeptide exit tunnel on the outside of the subunit. The polypeptide is Large ribosomal subunit protein uL24 (Methanococcus vannielii).